The primary structure comprises 278 residues: OX-2 membrane glycoprotein (278 aa).

A signal peptide spans 1–30 (MERLVIRMPFSHLSTYSLVWVMAAVVLCTA). The region spanning 31–141 (QVQVVTQDER…SGTACLTVYV (111 aa)) is the Ig-like V-type domain. At 31 to 232 (QVQVVTQDER…TDFKQTVNKG (202 aa)) the chain is on the extracellular side. 2 cysteine pairs are disulfide-bonded: cysteine 51–cysteine 121 and cysteine 118–cysteine 136. N-linked (GlcNAc...) asparagine glycosylation is found at asparagine 95, asparagine 103, and asparagine 110. Residues 142 to 232 (QPIVSLHYKF…TDFKQTVNKG (91 aa)) enclose the Ig-like C2-type domain. N-linked (GlcNAc...) asparagine glycans are attached at residues asparagine 157, asparagine 181, and asparagine 190. Cysteine 160 and cysteine 214 are joined by a disulfide. A helical membrane pass occupies residues 233–259 (YWFSVPLLLSIVSLVILLVLISILLYW). The Cytoplasmic segment spans residues 260–278 (KRHRNQDRGELSQGVQKMT).

CD200 and CD200R1 interact via their respective N-terminal Ig-like domains.

Its subcellular location is the cell membrane. Costimulates T-cell proliferation. May regulate myeloid cell activity in a variety of tissues. The sequence is that of OX-2 membrane glycoprotein (CD200) from Homo sapiens (Human).